Reading from the N-terminus, the 245-residue chain is 1-(5-phosphoribosyl)-5-[(5-phosphoribosylamino)methylideneamino] imidazole-4-carboxamide isomerase (245 aa).

Asp8 serves as the catalytic Proton acceptor. Asp131 functions as the Proton donor in the catalytic mechanism.

The protein belongs to the HisA/HisF family.

It localises to the cytoplasm. The catalysed reaction is 1-(5-phospho-beta-D-ribosyl)-5-[(5-phospho-beta-D-ribosylamino)methylideneamino]imidazole-4-carboxamide = 5-[(5-phospho-1-deoxy-D-ribulos-1-ylimino)methylamino]-1-(5-phospho-beta-D-ribosyl)imidazole-4-carboxamide. The protein operates within amino-acid biosynthesis; L-histidine biosynthesis; L-histidine from 5-phospho-alpha-D-ribose 1-diphosphate: step 4/9. The chain is 1-(5-phosphoribosyl)-5-[(5-phosphoribosylamino)methylideneamino] imidazole-4-carboxamide isomerase from Neisseria gonorrhoeae (strain NCCP11945).